The primary structure comprises 226 residues: ATP synthase F(0) complex subunit a (226 aa).

6 helical membrane-spanning segments follow: residues 5 to 25, 68 to 88, 97 to 117, 138 to 158, 160 to 180, and 189 to 209; these read LFASFIAPTILGLPAAVLIIL, WSLMLMWLIIFIATTNLLGLL, QLSMNLAMAIPLWAGAVTTGF, IPMLVIIETISLFIQPMALAV, LTANITAGHLLMHLIGSATLA, and TLIIFTVLILLTMLEIAVALI.

It belongs to the ATPase A chain family. As to quaternary structure, component of the ATP synthase complex composed at least of ATP5F1A/subunit alpha, ATP5F1B/subunit beta, ATP5MC1/subunit c (homooctomer), MT-ATP6/subunit a, MT-ATP8/subunit 8, ATP5ME/subunit e, ATP5MF/subunit f, ATP5MG/subunit g, ATP5MK/subunit k, ATP5MJ/subunit j, ATP5F1C/subunit gamma, ATP5F1D/subunit delta, ATP5F1E/subunit epsilon, ATP5PF/subunit F6, ATP5PB/subunit b, ATP5PD/subunit d, ATP5PO/subunit OSCP. ATP synthase complex consists of a soluble F(1) head domain (subunits alpha(3) and beta(3)) - the catalytic core - and a membrane F(0) domain - the membrane proton channel (subunits c, a, 8, e, f, g, k and j). These two domains are linked by a central stalk (subunits gamma, delta, and epsilon) rotating inside the F1 region and a stationary peripheral stalk (subunits F6, b, d, and OSCP). Interacts with DNAJC30; interaction is direct.

Its subcellular location is the mitochondrion inner membrane. The enzyme catalyses H(+)(in) = H(+)(out). Functionally, subunit a, of the mitochondrial membrane ATP synthase complex (F(1)F(0) ATP synthase or Complex V) that produces ATP from ADP in the presence of a proton gradient across the membrane which is generated by electron transport complexes of the respiratory chain. ATP synthase complex consist of a soluble F(1) head domain - the catalytic core - and a membrane F(1) domain - the membrane proton channel. These two domains are linked by a central stalk rotating inside the F(1) region and a stationary peripheral stalk. During catalysis, ATP synthesis in the catalytic domain of F(1) is coupled via a rotary mechanism of the central stalk subunits to proton translocation. With the subunit c (ATP5MC1), forms the proton-conducting channel in the F(0) domain, that contains two crucial half-channels (inlet and outlet) that facilitate proton movement from the mitochondrial intermembrane space (IMS) into the matrix. Protons are taken up via the inlet half-channel and released through the outlet half-channel, following a Grotthuss mechanism. In Gorilla gorilla gorilla (Western lowland gorilla), this protein is ATP synthase F(0) complex subunit a.